A 249-amino-acid chain; its full sequence is Cytokine-inducible SH2-containing protein (249 aa).

A disordered region spans residues 41–64 (AFPEEPAPTFAAPEPDGSAPQTRD). One can recognise an SH2 domain in the interval 84-165 (WYWGSITASE…PDVVSLIQHY (82 aa)). An SOCS box domain is found at 200-248 (KLLRPLGRRDSIPSLQHLCRLRINRCTTEVERLPLPRRMGDYLKQYPFQ).

It functions in the pathway protein modification; protein ubiquitination. Its function is as follows. SOCS family proteins form part of a classical negative feedback system that regulates cytokine signal transduction. CIS is involved in the negative regulation of cytokines that signal through the JAK-STAT5 pathway such as erythropoietin, prolactin and interleukin 3 (IL3) receptor. Inhibits STAT5 trans-activation by suppressing its tyrosine phosphorylation. May be a substrate-recognition component of a SCF-like ECS (Elongin BC-CUL2/5-SOCS-box protein) E3 ubiquitin-protein ligase complex which mediates the ubiquitination and subsequent proteasomal degradation of target proteins. The chain is Cytokine-inducible SH2-containing protein (CISH) from Gallus gallus (Chicken).